The sequence spans 394 residues: Alanine--glyoxylate aminotransferase (394 aa).

Residues 76 to 78, S153, and Q204 contribute to the pyridoxal 5'-phosphate site; that span reads AGH. Position 153 (S153) interacts with substrate. K205 is modified (N6-(pyridoxal phosphate)lysine). Pyridoxal 5'-phosphate is bound by residues Y256 and T259. Residue R356 coordinates substrate.

Belongs to the class-V pyridoxal-phosphate-dependent aminotransferase family. As to quaternary structure, homodimer. Requires pyridoxal 5'-phosphate as cofactor.

Its subcellular location is the peroxisome. It catalyses the reaction glyoxylate + L-alanine = glycine + pyruvate. The enzyme catalyses (2S)-2-aminobutanoate + glyoxylate = 2-oxobutanoate + glycine. The catalysed reaction is glyoxylate + L-phenylalanine = 3-phenylpyruvate + glycine. It carries out the reaction glyoxylate + L-serine = 3-hydroxypyruvate + glycine. It catalyses the reaction 2-oxobutanoate + L-alanine = (2S)-2-aminobutanoate + pyruvate. The enzyme catalyses L-phenylalanine + pyruvate = 3-phenylpyruvate + L-alanine. The catalysed reaction is L-serine + pyruvate = 3-hydroxypyruvate + L-alanine. Functionally, catalyzes the pyridoxal 5'-phosphate-dependent transamination of alanine with glyoxylate as an amino group acceptor. Can also catalyze, although with much less efficiency, the transamination of amino-butyrate, phenylalanine and serine with glyoxylate or pyruvate as an amino group acceptor. Does not catalyze the transamination of both 3-hydroxykynurenine and L-kynurenine. May play a role in the detoxification of glyoxylate, a toxic plant metabolite from the fly diet. This Drosophila melanogaster (Fruit fly) protein is Alanine--glyoxylate aminotransferase.